A 386-amino-acid polypeptide reads, in one-letter code: MSSTAVPRPKPWETSASLEEPQRNAQSLSAMMTSNQQDSRPTEESNNSNSASESAPEVLPRPAALNSSGTYGESNTIPGIYGNSNYGIPYDNNPYSMNSIYGNSIGRYGYGGSYYGNNYGSFYGGGYGAGAGYGMNNGSGLGESTKATFQLIESLIGAVTGFAQMLESTYMATHNSFFTMISVAEQFGNLKEMLGSFFGIFAIMKFLKKILYRATKGRLGIPPKNFAESEGSKNKLIEDFQKFNDSGTINSNEKATRRKISWKPLLFFLMAVFGFPYLLNKFITKLQTSGTIRASQGNGSEPIDPSKLEFARALYDFVPENPEMEVALKKGDLMAILSKKDPLGRDSDWWKVRTKNGNIGYIPYNYIEIIKRRKKIEHVDDETRTH.

Positions 1-76 (MSSTAVPRPK…SSGTYGESNT (76 aa)) are disordered. Residues 1–263 (MSSTAVPRPK…KATRRKISWK (263 aa)) lie on the Lumenal side of the membrane. Over residues 23-39 (RNAQSLSAMMTSNQQDS) the composition is skewed to polar residues. Residues 44–55 (ESNNSNSASESA) show a composition bias toward low complexity. Residues 65-76 (LNSSGTYGESNT) show a composition bias toward polar residues. Residues 264-280 (PLLFFLMAVFGFPYLLN) form a helical membrane-spanning segment. Over 281–386 (KFITKLQTSG…EHVDDETRTH (106 aa)) the chain is Cytoplasmic. The SH3 domain occupies 306–372 (SKLEFARALY…PYNYIEIIKR (67 aa)).

Belongs to the peroxin-13 family. In terms of assembly, interacts (via SH3 domain) with PEX14 (via SH3-binding motif); forming the PEX13-PEX14 docking complex.

It localises to the peroxisome membrane. Its function is as follows. Component of the PEX13-PEX14 docking complex, a translocon channel that specifically mediates the import of peroxisomal cargo proteins bound to PEX5 or PEX21 receptors. The PEX13-PEX14 docking complex forms a large import pore which can be opened to a diameter of about 9 nm. Mechanistically, PEX5 (or PEX21) receptor along with cargo proteins associates with the PEX14 subunit of the PEX13-PEX14 docking complex in the cytosol, leading to the insertion of the receptor into the organelle membrane with the concomitant translocation of the cargo into the peroxisome matrix. This Saccharomyces cerevisiae (strain ATCC 204508 / S288c) (Baker's yeast) protein is Peroxisomal membrane protein PEX13.